Here is a 163-residue protein sequence, read N- to C-terminus: MVEGEASSPAFTIDYAVATGDWPAEDVLRGLVERAVTAAAARTDGPLQASLSVLFTDDAEMRALNARFRGKDKPTNVLSFPAPDSMVPPGTPRHFGDIALGYETVSREAKEEGKSFEHHLTHLVVHGFLHLAGHDHETEVEAEEMEQLEREILQSLAIGDPYA.

Residues His126, His130, and His136 each contribute to the Zn(2+) site.

The protein belongs to the endoribonuclease YbeY family. Zn(2+) serves as cofactor.

It localises to the cytoplasm. In terms of biological role, single strand-specific metallo-endoribonuclease involved in late-stage 70S ribosome quality control and in maturation of the 3' terminus of the 16S rRNA. The polypeptide is Endoribonuclease YbeY (Chelativorans sp. (strain BNC1)).